We begin with the raw amino-acid sequence, 145 residues long: Peptide methionine sulfoxide reductase MsrB (145 aa).

The MsrB domain occupies 6 to 129 (KNERLKQLTD…NSAALRFIPV (124 aa)). Cys-118 serves as the catalytic Nucleophile.

This sequence belongs to the MsrB Met sulfoxide reductase family.

The enzyme catalyses L-methionyl-[protein] + [thioredoxin]-disulfide + H2O = L-methionyl-(R)-S-oxide-[protein] + [thioredoxin]-dithiol. In Listeria welshimeri serovar 6b (strain ATCC 35897 / DSM 20650 / CCUG 15529 / CIP 8149 / NCTC 11857 / SLCC 5334 / V8), this protein is Peptide methionine sulfoxide reductase MsrB.